The chain runs to 786 residues: Endonuclease MutS2 (786 aa).

335-342 (GPNTGGKT) is a binding site for ATP. In terms of domain architecture, Smr spans 711–786 (LDLRGERFEN…GLGVTVVELK (76 aa)).

It belongs to the DNA mismatch repair MutS family. MutS2 subfamily. As to quaternary structure, homodimer. Binds to stalled ribosomes, contacting rRNA.

Endonuclease that is involved in the suppression of homologous recombination and thus may have a key role in the control of bacterial genetic diversity. In terms of biological role, acts as a ribosome collision sensor, splitting the ribosome into its 2 subunits. Detects stalled/collided 70S ribosomes which it binds and splits by an ATP-hydrolysis driven conformational change. Acts upstream of the ribosome quality control system (RQC), a ribosome-associated complex that mediates the extraction of incompletely synthesized nascent chains from stalled ribosomes and their subsequent degradation. Probably generates substrates for RQC. This is Endonuclease MutS2 from Bacillus cytotoxicus (strain DSM 22905 / CIP 110041 / 391-98 / NVH 391-98).